An 888-amino-acid polypeptide reads, in one-letter code: Prodigiosin synthesizing transferase PigC (888 aa).

This sequence belongs to the PigC family.

Its pathway is antibiotic biosynthesis; prodigiosin biosynthesis. In terms of biological role, involved in the biosynthesis of 2-methyl-3-n-amyl-pyrrole (MAP), one of the terminal products involved in the biosynthesis of the red antibiotic prodigiosin (Pig). Catalyzes the transfer of 2-methyl-3-n-amyl-pyrrole (MAP) to 4-methoxy-2,2'-bipyrrole-5-carbaldehyde (MBC) to yield prodigiosin. It is able to use substrates with a variety of monocyclic rings in place of the pyrrolic ring A of its natural substrate. The sequence is that of Prodigiosin synthesizing transferase PigC from Serratia marcescens.